The sequence spans 539 residues: Glycine betaine transporter 2 (539 aa).

The next 12 membrane-spanning stretches (helical) occupy residues 44 to 64, 85 to 105, 129 to 149, 175 to 195, 231 to 251, 265 to 285, 299 to 319, 348 to 368, 380 to 400, 426 to 446, 480 to 500, and 503 to 523; these read LTNP…LLAL, FGAY…ALAF, IVLC…EPIA, FMHW…IVLM, CSII…GLQI, FITQ…SALS, IILS…SFII, WWTV…AIFI, LILS…SIVG, VLLA…LFLI, FWGL…SGGI, and LQSF…PSIL.

This sequence belongs to the BCCT transporter (TC 2.A.15) family.

The protein resides in the cell inner membrane. Its function is as follows. Involved in the uptake of the osmoprotectant glycine betaine. This chain is Glycine betaine transporter 2, found in Vibrio parahaemolyticus serotype O3:K6 (strain RIMD 2210633).